The sequence spans 145 residues: Globin-1 (145 aa).

Residues 1–145 (GISADQAKAL…VIVPGMKAGY (145 aa)) enclose the Globin domain. Histidine 63 and histidine 92 together coordinate heme b.

It belongs to the globin family. In terms of assembly, monomer.

The sequence is that of Globin-1 from Liolophura japonica (Chiton).